Here is a 762-residue protein sequence, read N- to C-terminus: Endothelin-converting enzyme 1 (762 aa).

The Cytoplasmic portion of the chain corresponds to 1 to 60 (MGSLRPPQGLGLQWSSFFLGKKGPGLTVSLPLLASSLQVNFRSPRSGQRCWAARTSVEKR). Residues 61–81 (LVVLVTLLAAGLVACLAALGI) traverse the membrane as a helical; Signal-anchor for type II membrane protein segment. Over 82–762 (QYRTRTPPVC…MNPRHKCEVW (681 aa)) the chain is Extracellular. The Peptidase M13 domain maps to 90 to 762 (VCLTEACVSV…MNPRHKCEVW (673 aa)). 5 cysteine pairs are disulfide-bonded: cysteine 91-cysteine 96, cysteine 114-cysteine 747, cysteine 122-cysteine 707, cysteine 177-cysteine 427, and cysteine 636-cysteine 759. Asparagine 158, asparagine 179, asparagine 202, asparagine 262, asparagine 308, asparagine 354, asparagine 375, and asparagine 531 each carry an N-linked (GlcNAc...) asparagine glycan. Histidine 599 is a Zn(2+) binding site. Glutamate 600 is a catalytic residue. Histidine 603 serves as a coordination point for Zn(2+). 2 N-linked (GlcNAc...) asparagine glycosylation sites follow: asparagine 624 and asparagine 643. Glutamate 659 serves as a coordination point for Zn(2+). The active-site Proton donor is the aspartate 663.

Belongs to the peptidase M13 family. In terms of assembly, homodimer; disulfide-linked. Interacts with PPP1R16B. Interacts with TSPAN8; this interaction recruits the endothelin converting enzyme ECE1 to tetraspanin-enriched microdomains and positively modulates its enzymatic activity. The cofactor is Zn(2+). All isoforms are expressed in aortic endothelial cells. Isoform A is also expressed in liver; isoform B in smooth muscle cells and fibroblasts; isoform C in aortic endothelial cells, smooth muscle cells, fibroblasts, liver and lung, and isoform D in smooth muscle cells.

It localises to the cell membrane. The enzyme catalyses Hydrolysis of the 21-Trp-|-Val-22 bond in big endothelin to form endothelin 1.. Its activity is regulated as follows. Inhibited by phosphoramidon. Its function is as follows. Converts big endothelin-1 to endothelin-1. The polypeptide is Endothelin-converting enzyme 1 (Ece1) (Rattus norvegicus (Rat)).